Consider the following 224-residue polypeptide: Peptide deformylase 3 (224 aa).

Fe cation contacts are provided by Cys135 and His177. Glu178 is an active-site residue. His181 serves as a coordination point for Fe cation.

Belongs to the polypeptide deformylase family. It depends on Fe(2+) as a cofactor.

It catalyses the reaction N-terminal N-formyl-L-methionyl-[peptide] + H2O = N-terminal L-methionyl-[peptide] + formate. Its function is as follows. Removes the formyl group from the N-terminal Met of newly synthesized proteins. Requires at least a dipeptide for an efficient rate of reaction. N-terminal L-methionine is a prerequisite for activity but the enzyme has broad specificity at other positions. This is Peptide deformylase 3 from Streptomyces avermitilis (strain ATCC 31267 / DSM 46492 / JCM 5070 / NBRC 14893 / NCIMB 12804 / NRRL 8165 / MA-4680).